A 230-amino-acid chain; its full sequence is N-(5'-phosphoribosyl)anthranilate isomerase (230 aa).

This sequence belongs to the TrpF family.

The catalysed reaction is N-(5-phospho-beta-D-ribosyl)anthranilate = 1-(2-carboxyphenylamino)-1-deoxy-D-ribulose 5-phosphate. The protein operates within amino-acid biosynthesis; L-tryptophan biosynthesis; L-tryptophan from chorismate: step 3/5. This is N-(5'-phosphoribosyl)anthranilate isomerase from Syntrophus aciditrophicus (strain SB).